A 1002-amino-acid polypeptide reads, in one-letter code: yemanuclein (1002 aa).

The Nuclear localization signal signature appears at 80–85; that stretch reads KKKTKK. Disordered stretches follow at residues 193 to 358, 395 to 428, and 642 to 725; these read AIIK…KKVV, VSTD…GQEN, and KLKA…AKQV. The segment covering 207 to 217 has biased composition (low complexity); it reads SSSSESSSSSS. Residues 218-262 show a composition bias toward acidic residues; that stretch reads GDDDENDDGNNEEDDESDSEDDSEENDESDSEDDSESESLEDEDS. 2 tandem repeats follow at residues 230–241 and 242–253. A 2 X 12 AA tandem repeats region spans residues 230–253; the sequence is EDDESDSEDDSEENDESDSEDDSE. Composition is skewed to low complexity over residues 286 to 320, 336 to 358, and 395 to 404; these read TGKS…RPST, QPSS…KKVV, and VSTDVSSSDS. Residues 408 to 427 are compositionally biased toward basic and acidic residues; it reads ESEHGRADRQAGQHGKDGQE. Low complexity predominate over residues 653–667; it reads PASASPKPVGVVSAP. Residues 679–689 show a composition bias toward basic and acidic residues; that stretch reads AVEDPRSRGNS. Phosphoserine occurs at positions 685 and 689. A compositionally biased stretch (low complexity) spans 690 to 701; the sequence is DTDSATSASSNS. S885, S886, and S887 each carry phosphoserine. The segment at 901 to 928 is disordered; that stretch reads SKPQKKVQSKPKNKTQNRGRSSLGAVGQ. Residues 903–917 show a composition bias toward basic residues; sequence PQKKVQSKPKNKTQN.

The N-terminus is blocked. Oocyte specific.

The protein resides in the nucleus. It localises to the nucleoplasm. It is found in the chromosome. Its subcellular location is the centromere. The protein localises to the kinetochore. Its function is as follows. May play a key role in egg organization. May be a transcriptional regulator having a role in chromatin remodeling in concert with Hira, a histone chaperone. Involved in chromosome segregation by affecting kinetochores function in the first meiotic division. The protein is yemanuclein of Drosophila melanogaster (Fruit fly).